Consider the following 1370-residue polypeptide: Histidine kinase P4 (1370 aa).

A signal peptide spans 1 to 20 (MRNIGVFSVILFSFLAISLK). The helical transmembrane segment at 799–819 (WAFCLYALCIGTALIALISFL) threads the bilayer. The Histidine kinase domain maps to 852–1072 (NISHEFRTPL…IFRVSLPLGR (221 aa)). Histidine 855 carries the phosphohistidine; by autocatalysis modification. A Response regulatory domain is found at 1119 to 1234 (TILIVEDHKP…EFRLRIKNIL (116 aa)). Aspartate 1167 bears the 4-aspartylphosphate mark. One can recognise an HTH araC/xylS-type domain in the interval 1266-1365 (KKAFKIVEDN…NETPSQYQNR (100 aa)). 2 DNA-binding regions (H-T-H motif) span residues 1284–1305 (LAFS…KAWT) and 1332–1355 (ISQI…QKKF).

Post-translationally, autophosphorylated. Activation requires a sequential transfer of a phosphate group from a His in the primary transmitter domain, to an Asp in the receiver domain and to a His in the secondary transmitter domain.

The protein localises to the membrane. It localises to the cell surface. The catalysed reaction is ATP + protein L-histidine = ADP + protein N-phospho-L-histidine.. Histidine kinase probably involved in ulvan degradation. Ulvan is the main polysaccharide component of the Ulvales (green seaweed) cell wall. It is composed of disaccharide building blocks comprising 3-sulfated rhamnose (Rha3S) linked to D-glucuronic acid (GlcA), L-iduronic acid (IduA), or D-xylose (Xyl). The sequence is that of Histidine kinase P4 from Formosa agariphila (strain DSM 15362 / KCTC 12365 / LMG 23005 / KMM 3901 / M-2Alg 35-1).